We begin with the raw amino-acid sequence, 475 residues long: Bifunctional protein HldE (475 aa).

The interval 1 to 318 is ribokinase; sequence MMQYSLKFNQ…ENAIHHREET (318 aa). Residue 195–198 coordinates ATP; sequence NMAE. Residue D264 is part of the active site. The cytidylyltransferase stretch occupies residues 344–475; the sequence is MTNGCFDILH…DVIKKIQAIR (132 aa).

In the N-terminal section; belongs to the carbohydrate kinase PfkB family. It in the C-terminal section; belongs to the cytidylyltransferase family. Homodimer.

The catalysed reaction is D-glycero-beta-D-manno-heptose 7-phosphate + ATP = D-glycero-beta-D-manno-heptose 1,7-bisphosphate + ADP + H(+). It catalyses the reaction D-glycero-beta-D-manno-heptose 1-phosphate + ATP + H(+) = ADP-D-glycero-beta-D-manno-heptose + diphosphate. The protein operates within nucleotide-sugar biosynthesis; ADP-L-glycero-beta-D-manno-heptose biosynthesis; ADP-L-glycero-beta-D-manno-heptose from D-glycero-beta-D-manno-heptose 7-phosphate: step 1/4. It functions in the pathway nucleotide-sugar biosynthesis; ADP-L-glycero-beta-D-manno-heptose biosynthesis; ADP-L-glycero-beta-D-manno-heptose from D-glycero-beta-D-manno-heptose 7-phosphate: step 3/4. It participates in bacterial outer membrane biogenesis; LOS core biosynthesis. In terms of biological role, catalyzes the phosphorylation of D-glycero-D-manno-heptose 7-phosphate at the C-1 position to selectively form D-glycero-beta-D-manno-heptose-1,7-bisphosphate. Its function is as follows. Catalyzes the ADP transfer from ATP to D-glycero-beta-D-manno-heptose 1-phosphate, yielding ADP-D-glycero-beta-D-manno-heptose. In Haemophilus ducreyi (strain 35000HP / ATCC 700724), this protein is Bifunctional protein HldE.